Here is a 72-residue protein sequence, read N- to C-terminus: Translation initiation factor IF-1 (72 aa).

Positions 1–72 (MAKEESIEIE…TKGRITYRYK (72 aa)) constitute an S1-like domain.

It belongs to the IF-1 family. Component of the 30S ribosomal translation pre-initiation complex which assembles on the 30S ribosome in the order IF-2 and IF-3, IF-1 and N-formylmethionyl-tRNA(fMet); mRNA recruitment can occur at any time during PIC assembly.

Its subcellular location is the cytoplasm. Functionally, one of the essential components for the initiation of protein synthesis. Stabilizes the binding of IF-2 and IF-3 on the 30S subunit to which N-formylmethionyl-tRNA(fMet) subsequently binds. Helps modulate mRNA selection, yielding the 30S pre-initiation complex (PIC). Upon addition of the 50S ribosomal subunit IF-1, IF-2 and IF-3 are released leaving the mature 70S translation initiation complex. The protein is Translation initiation factor IF-1 of Chlorobium chlorochromatii (strain CaD3).